The sequence spans 371 residues: Histidinol-phosphate aminotransferase (371 aa).

Lys228 carries the N6-(pyridoxal phosphate)lysine modification.

It belongs to the class-II pyridoxal-phosphate-dependent aminotransferase family. Histidinol-phosphate aminotransferase subfamily. As to quaternary structure, homodimer. The cofactor is pyridoxal 5'-phosphate.

The catalysed reaction is L-histidinol phosphate + 2-oxoglutarate = 3-(imidazol-4-yl)-2-oxopropyl phosphate + L-glutamate. It functions in the pathway amino-acid biosynthesis; L-histidine biosynthesis; L-histidine from 5-phospho-alpha-D-ribose 1-diphosphate: step 7/9. This chain is Histidinol-phosphate aminotransferase, found in Thermosynechococcus vestitus (strain NIES-2133 / IAM M-273 / BP-1).